We begin with the raw amino-acid sequence, 144 residues long: Prefoldin subunit alpha (144 aa).

This sequence belongs to the prefoldin subunit alpha family. Heterohexamer of two alpha and four beta subunits.

It localises to the cytoplasm. Its function is as follows. Molecular chaperone capable of stabilizing a range of proteins. Seems to fulfill an ATP-independent, HSP70-like function in archaeal de novo protein folding. The sequence is that of Prefoldin subunit alpha from Methanococcus maripaludis (strain DSM 14266 / JCM 13030 / NBRC 101832 / S2 / LL).